A 316-amino-acid chain; its full sequence is Transcription termination/antitermination protein NusG (316 aa).

The protein belongs to the NusG family.

Functionally, participates in transcription elongation, termination and antitermination. The sequence is that of Transcription termination/antitermination protein NusG from Mycoplasma genitalium (strain ATCC 33530 / DSM 19775 / NCTC 10195 / G37) (Mycoplasmoides genitalium).